The sequence spans 352 residues: Selenide, water dikinase (352 aa).

Cysteine 23 is a catalytic residue. Residues lysine 26 and 54 to 56 (SRD) contribute to the ATP site. Residue aspartate 57 participates in Mg(2+) binding. Residues aspartate 74, aspartate 97, and 145–147 (GHS) contribute to the ATP site. Mg(2+) is bound at residue aspartate 97. Residue aspartate 233 participates in Mg(2+) binding.

The protein belongs to the selenophosphate synthase 1 family. Class I subfamily. Homodimer. Mg(2+) serves as cofactor.

It carries out the reaction hydrogenselenide + ATP + H2O = selenophosphate + AMP + phosphate + 2 H(+). Its function is as follows. Synthesizes selenophosphate from selenide and ATP. This chain is Selenide, water dikinase, found in Shewanella putrefaciens (strain CN-32 / ATCC BAA-453).